The sequence spans 360 residues: Phosphoserine aminotransferase (360 aa).

Position 42 (R42) interacts with L-glutamate. Residues W102, T152, D171, and Q194 each contribute to the pyridoxal 5'-phosphate site. At K195 the chain carries N6-(pyridoxal phosphate)lysine. 237–238 (NT) provides a ligand contact to pyridoxal 5'-phosphate.

Belongs to the class-V pyridoxal-phosphate-dependent aminotransferase family. SerC subfamily. As to quaternary structure, homodimer. Pyridoxal 5'-phosphate is required as a cofactor.

Its subcellular location is the cytoplasm. The catalysed reaction is O-phospho-L-serine + 2-oxoglutarate = 3-phosphooxypyruvate + L-glutamate. It catalyses the reaction 4-(phosphooxy)-L-threonine + 2-oxoglutarate = (R)-3-hydroxy-2-oxo-4-phosphooxybutanoate + L-glutamate. The protein operates within amino-acid biosynthesis; L-serine biosynthesis; L-serine from 3-phospho-D-glycerate: step 2/3. It functions in the pathway cofactor biosynthesis; pyridoxine 5'-phosphate biosynthesis; pyridoxine 5'-phosphate from D-erythrose 4-phosphate: step 3/5. Its function is as follows. Catalyzes the reversible conversion of 3-phosphohydroxypyruvate to phosphoserine and of 3-hydroxy-2-oxo-4-phosphonooxybutanoate to phosphohydroxythreonine. The polypeptide is Phosphoserine aminotransferase (Coxiella burnetii (strain CbuG_Q212) (Coxiella burnetii (strain Q212))).